The following is a 401-amino-acid chain: Lipid-A-disaccharide synthase (401 aa).

It belongs to the LpxB family.

The catalysed reaction is a lipid X + a UDP-2-N,3-O-bis[(3R)-3-hydroxyacyl]-alpha-D-glucosamine = a lipid A disaccharide + UDP + H(+). It functions in the pathway bacterial outer membrane biogenesis; LPS lipid A biosynthesis. Functionally, condensation of UDP-2,3-diacylglucosamine and 2,3-diacylglucosamine-1-phosphate to form lipid A disaccharide, a precursor of lipid A, a phosphorylated glycolipid that anchors the lipopolysaccharide to the outer membrane of the cell. The protein is Lipid-A-disaccharide synthase of Rhodospirillum centenum (strain ATCC 51521 / SW).